Reading from the N-terminus, the 289-residue chain is Glucosamine-6-phosphate deaminase 1 (289 aa).

Residue K64 is modified to N6-acetyllysine. The Proton acceptor; for enolization step role is filled by D72. Residue D141 is the For ring-opening step of the active site. H143 acts as the Proton acceptor; for ring-opening step in catalysis. Residue E148 is the For ring-opening step of the active site. At T161 the chain carries Phosphothreonine.

This sequence belongs to the glucosamine/galactosamine-6-phosphate isomerase family. Homohexamer.

Its subcellular location is the cytoplasm. The enzyme catalyses alpha-D-glucosamine 6-phosphate + H2O = beta-D-fructose 6-phosphate + NH4(+). The protein operates within nucleotide-sugar biosynthesis; UDP-N-acetyl-alpha-D-glucosamine biosynthesis; alpha-D-glucosamine 6-phosphate from D-fructose 6-phosphate: step 1/1. With respect to regulation, allosterically activated by N-acetylglucosamine-6-phosphate (GlcNAc6P). In terms of biological role, catalyzes the reversible conversion of alpha-D-glucosamine 6-phosphate (GlcN-6P) into beta-D-fructose 6-phosphate (Fru-6P) and ammonium ion, a regulatory reaction step in de novo uridine diphosphate-N-acetyl-alpha-D-glucosamine (UDP-GlcNAc) biosynthesis via hexosamine pathway. Deamination is coupled to aldo-keto isomerization mediating the metabolic flux from UDP-GlcNAc toward Fru-6P. At high ammonium level can drive amination and isomerization of Fru-6P toward hexosamines and UDP-GlcNAc synthesis. Has a role in fine tuning the metabolic fluctuations of cytosolic UDP-GlcNAc and their effects on hyaluronan synthesis that occur during tissue remodeling. Seems to trigger calcium oscillations in mammalian eggs. These oscillations serve as the essential trigger for egg activation and early development of the embryo. This chain is Glucosamine-6-phosphate deaminase 1, found in Bos taurus (Bovine).